We begin with the raw amino-acid sequence, 310 residues long: Protein OS-9 homolog (310 aa).

The first 40 residues, 1 to 40 (MFSSSMFPHLILPAIGSSKVRTMVLPFAFVGFFIFPICLA), serve as a signal peptide directing secretion. N-linked (GlcNAc...) asparagine glycosylation is found at N60, N97, and N104. In terms of domain architecture, MRH spans 129–255 (NVFLIENRGY…TIHVPGLCSL (127 aa)). The a mannooligosaccharide derivative site is built by W139 and Q151. An N-linked (GlcNAc...) asparagine glycan is attached at N204. Cystine bridges form between C208–C241 and C223–C253. A mannooligosaccharide derivative-binding residues include D209, R215, E237, and Y243. 2 stretches are compositionally biased toward basic and acidic residues: residues 282–292 (VDHKDSQHVVD) and 301–310 (EVKEVETQSS). The disordered stretch occupies residues 282-310 (VDHKDSQHVVDEVAQTSPPEVKEVETQSS).

Belongs to the OS-9 family. In terms of assembly, interacts with missfolded ER lumenal proteins.

Its subcellular location is the endoplasmic reticulum membrane. Functionally, lectin involved in the quality control of the secretory pathway. As a member of the endoplasmic reticulum-associated degradation lumenal (ERAD-L) surveillance system, targets misfolded endoplasmic reticulum lumenal glycoproteins for degradation. The polypeptide is Protein OS-9 homolog (yos9) (Schizosaccharomyces pombe (strain 972 / ATCC 24843) (Fission yeast)).